Reading from the N-terminus, the 174-residue chain is Ribosome maturation factor RimM (174 aa).

The PRC barrel domain occupies 97 to 173 (GNKFYFHEVI…DLPVGLVEMY (77 aa)).

Belongs to the RimM family. In terms of assembly, binds ribosomal protein uS19.

It is found in the cytoplasm. Functionally, an accessory protein needed during the final step in the assembly of 30S ribosomal subunit, possibly for assembly of the head region. Essential for efficient processing of 16S rRNA. May be needed both before and after RbfA during the maturation of 16S rRNA. It has affinity for free ribosomal 30S subunits but not for 70S ribosomes. This chain is Ribosome maturation factor RimM, found in Flavobacterium johnsoniae (strain ATCC 17061 / DSM 2064 / JCM 8514 / BCRC 14874 / CCUG 350202 / NBRC 14942 / NCIMB 11054 / UW101) (Cytophaga johnsonae).